The chain runs to 309 residues: Homoserine kinase (309 aa).

Pro91–Cys101 contributes to the ATP binding site.

It belongs to the GHMP kinase family. Homoserine kinase subfamily.

It localises to the cytoplasm. The enzyme catalyses L-homoserine + ATP = O-phospho-L-homoserine + ADP + H(+). It participates in amino-acid biosynthesis; L-threonine biosynthesis; L-threonine from L-aspartate: step 4/5. In terms of biological role, catalyzes the ATP-dependent phosphorylation of L-homoserine to L-homoserine phosphate. In Cronobacter sakazakii (strain ATCC BAA-894) (Enterobacter sakazakii), this protein is Homoserine kinase.